We begin with the raw amino-acid sequence, 182 residues long: Ribosome-recycling factor (182 aa).

This sequence belongs to the RRF family.

The protein localises to the cytoplasm. In terms of biological role, responsible for the release of ribosomes from messenger RNA at the termination of protein biosynthesis. May increase the efficiency of translation by recycling ribosomes from one round of translation to another. In Prochlorococcus marinus (strain MIT 9313), this protein is Ribosome-recycling factor.